The sequence spans 399 residues: Elongation factor Tu 1 (399 aa).

The 192-residue stretch at 17 to 208 (KPHVNVGTIG…LDDYVEVPPR (192 aa)) folds into the tr-type G domain. The interval 26–33 (GHVDHGKT) is G1. 26 to 33 (GHVDHGKT) contributes to the GTP binding site. T33 contributes to the Mg(2+) binding site. Positions 62 to 66 (GITIA) are G2. Residues 83–86 (DCPG) form a G3 region. Residues 83 to 87 (DCPGH) and 138 to 141 (NKAD) each bind GTP. A G4 region spans residues 138–141 (NKAD). Positions 175–177 (SAL) are G5.

Belongs to the TRAFAC class translation factor GTPase superfamily. Classic translation factor GTPase family. EF-Tu/EF-1A subfamily. As to quaternary structure, monomer.

The protein resides in the cytoplasm. The catalysed reaction is GTP + H2O = GDP + phosphate + H(+). GTP hydrolase that promotes the GTP-dependent binding of aminoacyl-tRNA to the A-site of ribosomes during protein biosynthesis. The polypeptide is Elongation factor Tu 1 (Wolbachia sp. subsp. Brugia malayi (strain TRS)).